We begin with the raw amino-acid sequence, 604 residues long: Linalool synthase Tps-5042L13, chloroplastic (604 aa).

Residues 1-34 (MSSMRIYVAIMKKPSVKHVDNVDKKASKPSWRVS) constitute a chloroplast transit peptide. (2E)-geranyl diphosphate is bound by residues Arg323, Asp360, Asp364, Arg501, and Asp504. Asp360 and Asp364 together coordinate Mg(2+). The DDXXD motif motif lies at 360-364 (DDVYD). Residues Asp504, Thr508, and Glu512 each contribute to the Mg(2+) site.

The protein belongs to the terpene synthase family. Tpsb subfamily. In terms of assembly, monomer. Mg(2+) serves as cofactor. Requires Mn(2+) as cofactor.

It is found in the plastid. The protein resides in the chloroplast. It catalyses the reaction (2E)-geranyl diphosphate + H2O = linalool + diphosphate. Its pathway is secondary metabolite biosynthesis; terpenoid biosynthesis. In terms of biological role, monoterpene synthase (mono-TPS) involved in the biosynthesis of monoterpenes natural products. Catalyzes the conversion of (2E)-geranyl diphosphate (GPP) into linalool. This chain is Linalool synthase Tps-5042L13, chloroplastic, found in Perilla frutescens (Beefsteak mint).